Reading from the N-terminus, the 193-residue chain is Ribonuclease HII (193 aa).

The 179-residue stretch at 15 to 193 (YIVAGVDEAG…SYHRKSFKFC (179 aa)) folds into the RNase H type-2 domain. A divalent metal cation is bound by residues Asp-21, Glu-22, and Asp-112.

Belongs to the RNase HII family. It depends on Mn(2+) as a cofactor. Requires Mg(2+) as cofactor.

It is found in the cytoplasm. It carries out the reaction Endonucleolytic cleavage to 5'-phosphomonoester.. Its function is as follows. Endonuclease that specifically degrades the RNA of RNA-DNA hybrids. This Rickettsia typhi (strain ATCC VR-144 / Wilmington) protein is Ribonuclease HII.